A 516-amino-acid polypeptide reads, in one-letter code: MDGAGESRLGGDGGGDGSVGVQIRQTRMLPDFLQSVNLKYVKLGYHYLISNLLTLCLFPLAVVISVEASQMNPDDLKQLWIHLQYNLVSIIICSAILVFGLTVYVMTRPRPVYLVDFSCYLPPDHLKAPYARFMEHSRLTGDFDDSALEFQRKILERSGLGEDTYVPEAMHYVPPRISMAAAREEAEQVMFGALDNLFANTNVKPKDIGILVVNCSLFNPTPSLSAMIVNKYKLRGNIRSYNLGGMGCSAGVIAVDLAKDMLLVHRNTYAVVVSTENITQNWYFGNKKSMLIPNCLFRVGGSAVLLSNKSRDKRRSKYRLVHVVRTHRGADDKAFRCVYQEQDDTGRTGVSLSKDLMAIAGETLKTNITTLGPLVLPISEQILFFMTLVVKKLFNGKVKPYIPDFKLAFEHFCIHAGGRAVIDELEKNLQLSPVHVEASRMTLHRFGNTSSSSIWYELAYIEAKGRMRRGNRVWQIAFGSGFKCNSAIWEALRHVKPSNNSPWEDCIDKYPVTLSY.

The next 2 membrane-spanning stretches (helical) occupy residues 48-68 (LISN…SVEA) and 87-107 (LVSI…YVMT). Positions 104–393 (YVMTRPRPVY…FFMTLVVKKL (290 aa)) constitute an FAE domain. Catalysis depends on residues Cys248, His327, His411, His415, His444, and Asn448.

This sequence belongs to the thiolase-like superfamily. Chalcone/stilbene synthases family. In terms of tissue distribution, expressed at low levels in siliques, flowers, leaves and stems.

Its subcellular location is the membrane. The enzyme catalyses a very-long-chain acyl-CoA + malonyl-CoA + H(+) = a very-long-chain 3-oxoacyl-CoA + CO2 + CoA. Its pathway is lipid metabolism; fatty acid biosynthesis. The polypeptide is 3-ketoacyl-CoA synthase 4 (Arabidopsis thaliana (Mouse-ear cress)).